We begin with the raw amino-acid sequence, 435 residues long: MRYVPHTKEEIKAMLEAVGLRNVDELFSDIPTEALLKRHLQVEGGWDEEQLRAYFRKAASSIPDANSAVYFLGGGVYDHYVPSAVDKIIALPEFYTAYTPYQAEISQGTLQAMFEYQSLICELTGMEVANGSLYDGASAVAEAVLMAMRINGKRRVLVSECVHPDIIEVLRTYQLGQDFEILTLPQKEGVTDLSELEDLSNVSCLVMQNPNYYGFLENMNQASELIHKAGGLFVAAVDPLSLGVLKSPHEYGADVVVGEGQSLGNHMSYGGPHFGFFATKMDYIRYMPGRMAGQTVDVDGRVGYVLTLQTREQHIRREKATSNITSNHWLMALASAVYLSLMGGSLPELGQTILNRSTYLAQKLASVGYPLWQRQYFFKEFPIKARDAEAVQEALADSGYYVGPVIDEHTLLVAVTEKRTKEHMDKLIELMEGLR.

Belongs to the GcvP family. N-terminal subunit subfamily. In terms of assembly, the glycine cleavage system is composed of four proteins: P, T, L and H. In this organism, the P 'protein' is a heterodimer of two subunits.

It catalyses the reaction N(6)-[(R)-lipoyl]-L-lysyl-[glycine-cleavage complex H protein] + glycine + H(+) = N(6)-[(R)-S(8)-aminomethyldihydrolipoyl]-L-lysyl-[glycine-cleavage complex H protein] + CO2. In terms of biological role, the glycine cleavage system catalyzes the degradation of glycine. The P protein binds the alpha-amino group of glycine through its pyridoxal phosphate cofactor; CO(2) is released and the remaining methylamine moiety is then transferred to the lipoamide cofactor of the H protein. This Coprothermobacter proteolyticus (strain ATCC 35245 / DSM 5265 / OCM 4 / BT) protein is Probable glycine dehydrogenase (decarboxylating) subunit 1.